Consider the following 262-residue polypeptide: Type III pantothenate kinase (262 aa).

Position 9-16 (9-16 (DIGNTNVK)) interacts with ATP. Residues Y103 and 110–113 (GADR) each bind substrate. The active-site Proton acceptor is D112. D134 provides a ligand contact to K(+). T137 serves as a coordination point for ATP. T190 lines the substrate pocket.

It belongs to the type III pantothenate kinase family. As to quaternary structure, homodimer. The cofactor is NH4(+). Requires K(+) as cofactor.

It localises to the cytoplasm. It catalyses the reaction (R)-pantothenate + ATP = (R)-4'-phosphopantothenate + ADP + H(+). The protein operates within cofactor biosynthesis; coenzyme A biosynthesis; CoA from (R)-pantothenate: step 1/5. Catalyzes the phosphorylation of pantothenate (Pan), the first step in CoA biosynthesis. The protein is Type III pantothenate kinase of Nitratidesulfovibrio vulgaris (strain ATCC 29579 / DSM 644 / CCUG 34227 / NCIMB 8303 / VKM B-1760 / Hildenborough) (Desulfovibrio vulgaris).